The sequence spans 143 residues: MSFRGLNASSGMGVADHSKNTFLELKRKKVHRYVIFKIDEKKKEVVVEKTGGPAESFDEFAAALPENDCRYAVYDFDFVTSENCQKSKIFFIAWSPDSSRIRAKMLYATSKERFRRELDGVHYEIQATDPTEMDLEVLRERAH.

Residues 11–143 form the ADF-H domain; that stretch reads GMGVADHSKN…DLEVLRERAH (133 aa).

Belongs to the actin-binding proteins ADF family.

Actin-depolymerizing protein. Severs actin filaments (F-actin) and binds to actin monomers. This chain is Actin-depolymerizing factor, found in Vitis vinifera (Grape).